The sequence spans 443 residues: Endothelin receptor type B (443 aa).

The first 26 residues, 1-26 (MQPLPTLCGRVLVALILACGVAGVQG), serve as a signal peptide directing secretion. Residues 27-102 (EERRFPPARA…RTIEIKETFK (76 aa)) lie on the Extracellular side of the membrane. Over residues 51–62 (TKTSWPTGSNAS) the composition is skewed to polar residues. A disordered region spans residues 51–89 (TKTSWPTGSNASVPRLSAPPQMPKAGRTAGAQRRTLPPP). N-linked (GlcNAc...) asparagine glycosylation occurs at Asn60. Residues 103-127 (YINTVVSCLVFVLGIIGNSTLLRII) form a helical membrane-spanning segment. The Cytoplasmic segment spans residues 128-138 (YKNKCMRNGPN). Residues 139–164 (ILIASLALGDLLHIIIDIPINVYKLL) traverse the membrane as a helical segment. Residues 165–176 (AEDWPFGVEMCK) are Extracellular-facing. Cys175 and Cys256 are joined by a disulfide. A helical membrane pass occupies residues 177–198 (LVPFIQKASVGITVLSLCALSI). Residues 199–219 (DRYRAVASWSRIKGIGVPKWT) are Cytoplasmic-facing. A helical transmembrane segment spans residues 220–244 (AVEIVLIWVVSVVLAVPEAVGFDMI). Over 245–272 (TADYKGSYLRICLLHPTQKTAFMQFYKN) the chain is Extracellular. A helical membrane pass occupies residues 273-297 (AKDWWLFSFYFCLPLAITAFFYTLE). At 298 to 325 (TCEMLRKKSGMQIALNDHLKQRREVAKT) the chain is on the cytoplasmic side. Ser306 is modified (phosphoserine). Residues 326–351 (VFCLVLVFALCWLPLHLSRILKHTLY) traverse the membrane as a helical segment. At 352–363 (DQNDPHRCELLS) the chain is on the extracellular side. Residues 364 to 390 (FLLVLEYIGINMASLNSCINPIALYLV) form a helical membrane-spanning segment. Residues 391-443 (SKRFKNCFKWCLCCWCQSFEEKQSLEDKQSCLKFKANDHGYDNFRSSNKYSSS) are Cytoplasmic-facing. S-palmitoyl cysteine attachment occurs at residues Cys403, Cys404, and Cys406. Residue Ser420 is modified to Phosphoserine. Tyr440 bears the Phosphotyrosine mark. Residues Ser441, Ser442, and Ser443 each carry the phosphoserine modification.

This sequence belongs to the G-protein coupled receptor 1 family. Endothelin receptor subfamily. EDNRB sub-subfamily.

The protein resides in the cell membrane. Its function is as follows. Non-specific receptor for endothelin 1, 2, and 3. Mediates its action by association with G proteins that activate a phosphatidylinositol-calcium second messenger system. The chain is Endothelin receptor type B (EDNRB) from Equus caballus (Horse).